The sequence spans 87 residues: Small ribosomal subunit protein bS18 (87 aa).

Belongs to the bacterial ribosomal protein bS18 family. In terms of assembly, part of the 30S ribosomal subunit. Forms a tight heterodimer with protein bS6.

Functionally, binds as a heterodimer with protein bS6 to the central domain of the 16S rRNA, where it helps stabilize the platform of the 30S subunit. This is Small ribosomal subunit protein bS18 from Sulfurimonas denitrificans (strain ATCC 33889 / DSM 1251) (Thiomicrospira denitrificans (strain ATCC 33889 / DSM 1251)).